The following is a 278-amino-acid chain: Large ribosomal subunit protein uL2 (278 aa).

A disordered region spans residues 224 to 262; it reads VMNPVDHPLGGGEGRTSGGRHPVTPWGKPTKGFKTRKTR.

This sequence belongs to the universal ribosomal protein uL2 family. In terms of assembly, part of the 50S ribosomal subunit. Forms a bridge to the 30S subunit in the 70S ribosome.

One of the primary rRNA binding proteins. Required for association of the 30S and 50S subunits to form the 70S ribosome, for tRNA binding and peptide bond formation. It has been suggested to have peptidyltransferase activity; this is somewhat controversial. Makes several contacts with the 16S rRNA in the 70S ribosome. The sequence is that of Large ribosomal subunit protein uL2 from Leptospira biflexa serovar Patoc (strain Patoc 1 / Ames).